The primary structure comprises 124 residues: NADH-quinone oxidoreductase subunit A (124 aa).

The next 3 membrane-spanning stretches (helical) occupy residues 11–31, 68–88, and 93–113; these read YLPI…IMIL, LVAI…PWAI, and IGKI…IGFV.

Belongs to the complex I subunit 3 family. As to quaternary structure, NDH-1 is composed of 14 different subunits. Subunits NuoA, H, J, K, L, M, N constitute the membrane sector of the complex.

It is found in the cell inner membrane. It catalyses the reaction a quinone + NADH + 5 H(+)(in) = a quinol + NAD(+) + 4 H(+)(out). NDH-1 shuttles electrons from NADH, via FMN and iron-sulfur (Fe-S) centers, to quinones in the respiratory chain. The immediate electron acceptor for the enzyme in this species is believed to be ubiquinone. Couples the redox reaction to proton translocation (for every two electrons transferred, four hydrogen ions are translocated across the cytoplasmic membrane), and thus conserves the redox energy in a proton gradient. The chain is NADH-quinone oxidoreductase subunit A from Rickettsia bellii (strain RML369-C).